The sequence spans 293 residues: Homeobox protein ceh-24 (293 aa).

2 stretches are compositionally biased toward basic and acidic residues: residues 1–15 (MSEK…KKDE) and 22–38 (QETK…MKIK). 2 disordered regions span residues 1-38 (MSEK…MKIK) and 203-256 (EKEK…SNGV). A DNA-binding region (homeobox) is located at residues 144–203 (RRKRRVLFSQAQVYELERRFKQAKYLTAPEREQLANSIRLTPTQVKIWFQNHRYKCKRQE).

The protein belongs to the NK-2 homeobox family. Expressed in the 8 vulval muscles, 8-10 ventral neurons in the head and in the most posterior pharyngeal muscle cell, m8.

The protein resides in the nucleus. Its function is as follows. Probable transcriptional regulator that is required in neural development for the normal formation of sublateral cholinergic motor neuron processes. Plays a role in regulating the expression of acetylcholine transporter protein unc-17 in the sublateral processes. In particular, it is required in sublateral motor neurons for a left-right turning behavior that occurs during the lethargus phase of the normal sleep process called 'flipping'. During 'flipping' animals rotate 180 degrees about their longitudinal axis. The sequence is that of Homeobox protein ceh-24 from Caenorhabditis briggsae.